A 111-amino-acid polypeptide reads, in one-letter code: Large ribosomal subunit protein uL22 (111 aa).

This sequence belongs to the universal ribosomal protein uL22 family. In terms of assembly, part of the 50S ribosomal subunit.

This protein binds specifically to 23S rRNA; its binding is stimulated by other ribosomal proteins, e.g. L4, L17, and L20. It is important during the early stages of 50S assembly. It makes multiple contacts with different domains of the 23S rRNA in the assembled 50S subunit and ribosome. In terms of biological role, the globular domain of the protein is located near the polypeptide exit tunnel on the outside of the subunit, while an extended beta-hairpin is found that lines the wall of the exit tunnel in the center of the 70S ribosome. This Clostridioides difficile (strain 630) (Peptoclostridium difficile) protein is Large ribosomal subunit protein uL22.